Reading from the N-terminus, the 63-residue chain is Alpha-toxin CsE5 (63 aa).

Residues 2-61 form the LCN-type CS-alpha/beta domain; that stretch reads KDGYPVDSGNCKYECLKDDYCNDLCLERKADKGYCYWGKVSCYCYGLPDNSPTKTSGKCN. Disulfide bonds link Cys-12-Cys-60, Cys-16-Cys-36, Cys-22-Cys-43, and Cys-26-Cys-45.

The protein belongs to the long (4 C-C) scorpion toxin superfamily. Sodium channel inhibitor family. Alpha subfamily. As to expression, expressed by the venom gland.

The protein resides in the secreted. Alpha toxins bind voltage-independently at site-3 of sodium channels (Nav) and inhibit the inactivation of the activated channels, thereby blocking neuronal transmission. The sequence is that of Alpha-toxin CsE5 from Centruroides sculpturatus (Arizona bark scorpion).